We begin with the raw amino-acid sequence, 587 residues long: Arginine--tRNA ligase (587 aa).

The 'HIGH' region motif lies at 127–137 (ANPTGPLHVGH).

This sequence belongs to the class-I aminoacyl-tRNA synthetase family. Monomer.

Its subcellular location is the cytoplasm. It carries out the reaction tRNA(Arg) + L-arginine + ATP = L-arginyl-tRNA(Arg) + AMP + diphosphate. In Dechloromonas aromatica (strain RCB), this protein is Arginine--tRNA ligase.